The primary structure comprises 492 residues: GTPase-activating protein MSB4 (492 aa).

Residues 147–367 (GIPAEWRGNA…RIWDCLFYEE (221 aa)) enclose the Rab-GAP TBC domain.

It is found in the cytoplasm. It localises to the bud. The protein resides in the bud neck. Functionally, regulates exocytosis by functioning as a GAP for SEC4. Also required for efficient polarization of the actin patches. This Saccharomyces cerevisiae (strain ATCC 204508 / S288c) (Baker's yeast) protein is GTPase-activating protein MSB4 (MSB4).